The chain runs to 226 residues: MCLRELDLNGLRIKTPAIVASLGADAERVASRAESEGADIIEVRLDLLADPDVIRDIRSTVSLPLIATNRIASEGGSFRGSEERRISILRDASRFSDIIDIELMAPGRDMLLKNISCPALISYHDFSGVPDNLKSIIEDAMRAGADLVKIAVTPHSMQEALAILRILLDVDCPLCIIGMGAVGRHLRAVAPLYGSLLTYGYVTGPTAPGQMSVRELDTALRCLGAR.

3-dehydroquinate-binding positions include S21, E42–R44, and R70. Residue H124 is the Proton donor/acceptor of the active site. Catalysis depends on K149, which acts as the Schiff-base intermediate with substrate. 3-dehydroquinate contacts are provided by R187, T206, and Q210.

This sequence belongs to the type-I 3-dehydroquinase family. Homodimer.

It catalyses the reaction 3-dehydroquinate = 3-dehydroshikimate + H2O. It functions in the pathway metabolic intermediate biosynthesis; chorismate biosynthesis; chorismate from D-erythrose 4-phosphate and phosphoenolpyruvate: step 3/7. In terms of biological role, involved in the third step of the chorismate pathway, which leads to the biosynthesis of aromatic amino acids. Catalyzes the cis-dehydration of 3-dehydroquinate (DHQ) and introduces the first double bond of the aromatic ring to yield 3-dehydroshikimate. This chain is 3-dehydroquinate dehydratase, found in Methanothrix thermoacetophila (strain DSM 6194 / JCM 14653 / NBRC 101360 / PT) (Methanosaeta thermophila).